Here is an 89-residue protein sequence, read N- to C-terminus: UPF0297 protein SUB1776 (89 aa).

Belongs to the UPF0297 family.

This is UPF0297 protein SUB1776 from Streptococcus uberis (strain ATCC BAA-854 / 0140J).